The chain runs to 116 residues: U16-barytoxin-Tl1f (116 aa).

An N-terminal signal peptide occupies residues 1-20 (MKTIIVFLSLLVLATKFGDA). Positions 21 to 74 (NEGVNQEQMKEVIQNEFREDFLNEMAPMSLLQQLEAIESTLLEKEADRNSRQKR) are excised as a propeptide. 3 cysteine pairs are disulfide-bonded: cysteine 75–cysteine 90, cysteine 82–cysteine 95, and cysteine 89–cysteine 110. A glycan (N-linked (GlcNAc...) asparagine) is linked at asparagine 85.

Belongs to the neurotoxin 14 (magi-1) family. 06 (ICK-Trit) subfamily. In terms of tissue distribution, expressed by the venom gland.

It is found in the secreted. In terms of biological role, ion channel inhibitor. The sequence is that of U16-barytoxin-Tl1f from Trittame loki (Brush-footed trapdoor spider).